Consider the following 233-residue polypeptide: Ribonuclease 3 (233 aa).

The RNase III domain maps to 4 to 126 (LNKLMERLGH…IVGSIYIDAG (123 aa)). Glu-39 lines the Mg(2+) pocket. The active site involves Asp-43. Mg(2+) contacts are provided by Asp-112 and Glu-115. Residue Glu-115 is part of the active site. The DRBM domain maps to 153–222 (DAKSLLQEWL…AKRFLELLDD (70 aa)).

It belongs to the ribonuclease III family. In terms of assembly, homodimer. Mg(2+) is required as a cofactor.

The protein resides in the cytoplasm. The enzyme catalyses Endonucleolytic cleavage to 5'-phosphomonoester.. Its function is as follows. Digests double-stranded RNA. Involved in the processing of primary rRNA transcript to yield the immediate precursors to the large and small rRNAs (23S and 16S). Processes some mRNAs, and tRNAs when they are encoded in the rRNA operon. Processes pre-crRNA and tracrRNA of type II CRISPR loci if present in the organism. This Coxiella burnetii (strain CbuG_Q212) (Coxiella burnetii (strain Q212)) protein is Ribonuclease 3.